Reading from the N-terminus, the 304-residue chain is Undecaprenyl-diphosphatase (304 aa).

Transmembrane regions (helical) follow at residues 1-21, 54-74, 90-110, 114-134, 192-212, 225-245, and 253-273; these read MSLL…FLPV, TTLA…AAGL, LAWF…LFEE, ALGN…LLAA, FLLS…KTVP, LVGT…LLGW, and LFVV…WQGV.

Belongs to the UppP family.

It localises to the cell inner membrane. It catalyses the reaction di-trans,octa-cis-undecaprenyl diphosphate + H2O = di-trans,octa-cis-undecaprenyl phosphate + phosphate + H(+). Catalyzes the dephosphorylation of undecaprenyl diphosphate (UPP). Confers resistance to bacitracin. The polypeptide is Undecaprenyl-diphosphatase (Anaeromyxobacter sp. (strain Fw109-5)).